A 252-amino-acid polypeptide reads, in one-letter code: Imidazole glycerol phosphate synthase subunit HisF (252 aa).

Active-site residues include aspartate 12 and aspartate 131.

The protein belongs to the HisA/HisF family. In terms of assembly, heterodimer of HisH and HisF.

The protein resides in the cytoplasm. It carries out the reaction 5-[(5-phospho-1-deoxy-D-ribulos-1-ylimino)methylamino]-1-(5-phospho-beta-D-ribosyl)imidazole-4-carboxamide + L-glutamine = D-erythro-1-(imidazol-4-yl)glycerol 3-phosphate + 5-amino-1-(5-phospho-beta-D-ribosyl)imidazole-4-carboxamide + L-glutamate + H(+). Its pathway is amino-acid biosynthesis; L-histidine biosynthesis; L-histidine from 5-phospho-alpha-D-ribose 1-diphosphate: step 5/9. In terms of biological role, IGPS catalyzes the conversion of PRFAR and glutamine to IGP, AICAR and glutamate. The HisF subunit catalyzes the cyclization activity that produces IGP and AICAR from PRFAR using the ammonia provided by the HisH subunit. The polypeptide is Imidazole glycerol phosphate synthase subunit HisF (Thermus thermophilus (strain ATCC BAA-163 / DSM 7039 / HB27)).